The primary structure comprises 460 residues: Light-independent protochlorophyllide reductase subunit N (460 aa).

The [4Fe-4S] cluster site is built by Cys22, Cys47, and Cys107.

Belongs to the BchN/ChlN family. As to quaternary structure, protochlorophyllide reductase is composed of three subunits; ChlL, ChlN and ChlB. Forms a heterotetramer of two ChlB and two ChlN subunits. Requires [4Fe-4S] cluster as cofactor.

Its subcellular location is the plastid. The protein localises to the cyanelle. The enzyme catalyses chlorophyllide a + oxidized 2[4Fe-4S]-[ferredoxin] + 2 ADP + 2 phosphate = protochlorophyllide a + reduced 2[4Fe-4S]-[ferredoxin] + 2 ATP + 2 H2O. It functions in the pathway porphyrin-containing compound metabolism; chlorophyll biosynthesis (light-independent). Component of the dark-operative protochlorophyllide reductase (DPOR) that uses Mg-ATP and reduced ferredoxin to reduce ring D of protochlorophyllide (Pchlide) to form chlorophyllide a (Chlide). This reaction is light-independent. The NB-protein (ChlN-ChlB) is the catalytic component of the complex. The sequence is that of Light-independent protochlorophyllide reductase subunit N from Cyanophora paradoxa.